A 407-amino-acid chain; its full sequence is Cell division control protein 12 (407 aa).

At Ser2 the chain carries N-acetylserine. The 284-residue stretch at 31–314 folds into the Septin-type G domain; sequence EGGTFTVMLC…ETYRRLRLEG (284 aa). Residues 41-48 form a G1 motif region; the sequence is GESGLGKT. GTP-binding positions include 41–48, Thr75, Gly101, 180–188, Gly247, and Arg263; these read GESGLGKT and KADTLTAQE. Residues 98-101 are G3 motif; the sequence is DTPG. The segment at 179–182 is G4 motif; sequence AKAD. The stretch at 344 to 406 forms a coiled coil; sequence EEENALKKYF…KSLQVKKSHL (63 aa).

It belongs to the TRAFAC class TrmE-Era-EngA-EngB-Septin-like GTPase superfamily. Septin GTPase family. Component of the septin complex which consists of CDC3, CDC10, CDC11, CDC12 and probably SHS1 and rearranges to a cortical collar of highly ordered filaments at the mother-bud-neck. A complex formed by CDC3, CDC10, CDC11 and CDC12 is capable of forming long filaments in vitro and the components seem to be present in a 2:2:2:2 arrangement in vivo. The filaments are proposed to be formed by the end-to-end polymerization of CDC3-CDC12-CDC11 complexes with CDC10 serving as a bridge to bundle the polymers into paired filaments. Component of the GIN4 complex composed of at least BNI5, CDC3, CDC10, CDC11, CDC12, GIN4, NAP1 and SHS1. Self-associates. Interacts with SYP1.

Its subcellular location is the membrane. The protein resides in the bud neck. Functionally, septins are GTPases involved in cytokinesis that assemble early in the cell cycle as a patch at the incipient bud site and form a ring approximate 15 minutes before bud emergence, which transforms into an hour-glass shaped collar of cortical filaments that spans both sides of the mother-bud neck. This collar persists until just before cytokinesis, when it splits into two rings that occupy opposite sides of the neck. The septins at the bud neck serve as a structural scaffold that recruits different components involved in diverse processes at specific stages during the cell cycle. Many proteins bind asymmetrically to the septin collar. The septin assembly is regulated by protein kinases GIN4 and/or CLA4. May act by recruiting MYO1 and HOF1, a protein involved in septation, to the site of cleavage. Septins are also involved in cell morphogenesis, bud site selection, chitin deposition, cell cycle regulation, cell compartmentalization and spore wall formation. This Saccharomyces cerevisiae (strain ATCC 204508 / S288c) (Baker's yeast) protein is Cell division control protein 12 (CDC12).